The primary structure comprises 146 residues: Large ribosomal subunit protein uL15 (146 aa).

The interval 1–54 is disordered; sequence MKLHELKPAAGSKKAPKRIGRGTGSGLGRNAGKGEKGQNARSGGGVRPGFEGGQ. 2 stretches are compositionally biased toward gly residues: residues 21–31 and 42–52; these read RGTGSGLGRNA and SGGGVRPGFEG.

The protein belongs to the universal ribosomal protein uL15 family. As to quaternary structure, part of the 50S ribosomal subunit.

Functionally, binds to the 23S rRNA. The polypeptide is Large ribosomal subunit protein uL15 (Clostridium beijerinckii (strain ATCC 51743 / NCIMB 8052) (Clostridium acetobutylicum)).